A 289-amino-acid polypeptide reads, in one-letter code: Paired box protein 5 homolog (289 aa).

Positions Ser-29 to Lys-155 form a DNA-binding region, paired. Positions Gly-32–Thr-88 are PAI subdomain. The RED subdomain stretch occupies residues Arg-107–Lys-155. Low complexity-rich tracts occupy residues Ser-166–Ser-179 and Val-189–Ser-198. The disordered stretch occupies residues Ser-166–Ser-198.

It localises to the nucleus. It is found in the chromosome. Its function is as follows. Transcription factor. Binds to specific DNA sequence motifs in regulatory elements, for example in the genes encoding transcription factor lin-48, apoptosis regulator ced-9 and neuropeptide-like protein nlp-2. Specifies cell fate, playing an essential role in embryonic and larval development. Involved in morphogenesis of the vulva and uterus in hermaphrodites and of the rectal epithelium of the tail in males. Plays multiple roles in the development of the egg-laying system, acting in both lin-3/EGF-pathway-dependent and -independent processes. Positively regulates expression of neuropeptide-like proteins nlp-2 and nlp-7 in uvl cells in an EGF-pathway-dependent manner. Involved in negatively modulating apoptosis in germline and somatic cells, acting in partial redundancy with transcription factor pax-2, probably by directly regulating transcription of ced-9. Positively regulates transcription of lin-48 in hindgut cells and functions in the development of the hindgut. The sequence is that of Paired box protein 5 homolog from Caenorhabditis elegans.